The following is a 374-amino-acid chain: Chaperone protein DnaJ (374 aa).

Positions 5–69 constitute a J domain; sequence DYYEVLGVSK…DKKAKYDQFG (65 aa). A CR-type zinc finger spans residues 141 to 223; it reads GVNKKTILNL…CHGKGVESKR (83 aa). 8 residues coordinate Zn(2+): Cys154, Cys157, Cys171, Cys174, Cys197, Cys200, Cys211, and Cys214. 4 CXXCXGXG motif repeats span residues 154–161, 171–178, 197–204, and 211–218; these read CTKCDGVG, CTKCNGAG, CDKCNGVG, and CKNCHGKG.

This sequence belongs to the DnaJ family. As to quaternary structure, homodimer. Requires Zn(2+) as cofactor.

Its subcellular location is the cytoplasm. In terms of biological role, participates actively in the response to hyperosmotic and heat shock by preventing the aggregation of stress-denatured proteins and by disaggregating proteins, also in an autonomous, DnaK-independent fashion. Unfolded proteins bind initially to DnaJ; upon interaction with the DnaJ-bound protein, DnaK hydrolyzes its bound ATP, resulting in the formation of a stable complex. GrpE releases ADP from DnaK; ATP binding to DnaK triggers the release of the substrate protein, thus completing the reaction cycle. Several rounds of ATP-dependent interactions between DnaJ, DnaK and GrpE are required for fully efficient folding. Also involved, together with DnaK and GrpE, in the DNA replication of plasmids through activation of initiation proteins. In Mesoplasma florum (strain ATCC 33453 / NBRC 100688 / NCTC 11704 / L1) (Acholeplasma florum), this protein is Chaperone protein DnaJ.